Consider the following 225-residue polypeptide: Small ribosomal subunit protein uS7 (225 aa).

S2 bears the N-acetylserine mark. Residue T27 is modified to Phosphothreonine. Glycyl lysine isopeptide (Lys-Gly) (interchain with G-Cter in ubiquitin) cross-links involve residues K45 and K203.

The protein belongs to the universal ribosomal protein uS7 family. As to quaternary structure, component of the small ribosomal subunit (SSU). Mature yeast ribosomes consist of a small (40S) and a large (60S) subunit. The 40S small subunit contains 1 molecule of ribosomal RNA (18S rRNA) and 33 different proteins (encoded by 57 genes). The large 60S subunit contains 3 rRNA molecules (25S, 5.8S and 5S rRNA) and 46 different proteins (encoded by 81 genes). In terms of processing, N-terminally acetylated by acetyltransferase NatA.

It is found in the cytoplasm. In terms of biological role, component of the ribosome, a large ribonucleoprotein complex responsible for the synthesis of proteins in the cell. The small ribosomal subunit (SSU) binds messenger RNAs (mRNAs) and translates the encoded message by selecting cognate aminoacyl-transfer RNA (tRNA) molecules. The large subunit (LSU) contains the ribosomal catalytic site termed the peptidyl transferase center (PTC), which catalyzes the formation of peptide bonds, thereby polymerizing the amino acids delivered by tRNAs into a polypeptide chain. The nascent polypeptides leave the ribosome through a tunnel in the LSU and interact with protein factors that function in enzymatic processing, targeting, and the membrane insertion of nascent chains at the exit of the ribosomal tunnel. The protein is Small ribosomal subunit protein uS7 of Saccharomyces cerevisiae (strain ATCC 204508 / S288c) (Baker's yeast).